Reading from the N-terminus, the 288-residue chain is Carbon monoxide dehydrogenase medium chain (288 aa).

Residues 1-177 form the FAD-binding PCMH-type domain; it reads MIPGSFDYHR…TAIRIPVPPT (177 aa). FAD contacts are provided by residues 32 to 36 and 111 to 115; these read AGGHS and TIGGN.

In terms of assembly, dimer of heterotrimers. Each heterotrimer consists of a large, a medium and a small subunit. The cofactor is FAD.

The catalysed reaction is CO + a quinone + H2O = a quinol + CO2. Functionally, catalyzes the oxidation of carbon monoxide to carbon dioxide. This is Carbon monoxide dehydrogenase medium chain (coxM) from Afipia carboxidovorans (strain ATCC 49405 / DSM 1227 / KCTC 32145 / OM5) (Oligotropha carboxidovorans).